We begin with the raw amino-acid sequence, 1802 residues long: Signaling mucin HKR1 (1802 aa).

The first 21 residues, 1–21 (MVSLKIKKILLLVSLLNAIEA), serve as a signal peptide directing secretion. The Extracellular segment spans residues 22-1485 (YSNDTIYSTS…SASAGKYAVK (1464 aa)). N-linked (GlcNAc...) asparagine glycosylation is present at asparagine 24. 2 disordered regions span residues 47 to 176 (ISST…PREI) and 261 to 311 (YSSS…VSRP). The segment covering 54–81 (NKENAITSSSETTTMAGQYGESGSTTIM) has biased composition (polar residues). Low complexity predominate over residues 88–107 (TSSQYISVTTTTQTSDTMSS). A compositionally biased stretch (polar residues) spans 113-143 (EIATPSSSIVPTPLQSYSDESQISQTLSHNP). Composition is skewed to low complexity over residues 145-172 (SVAESDSDTTSSESSSSVIISTSDSSAV) and 261-302 (YSSS…SESS). Residues 453 to 480 (SVPVAVSSTYTSSPSASVVVPSAYASSP) form a 1; approximate repeat. Residues 453–788 (SVPVAVSSTY…VLSSTSTSSP (336 aa)) form a 12 X 28 AA tandem repeats of S-[AV]-[P]-V-A-V-S-S-T-Y-T-S-S-P-S-A-P-A-A-I-S-S-T-Y-T-S-S-P region. 11 consecutive repeat copies span residues 481 to 508 (SVPVAVSSTYTSSPSAPAAISSTYTSSP), 509 to 536 (SAPVAVSSTYTSSPSAPAAISSTYTSSP), 537 to 564 (SAPVAVSSTYTSSPSAPAAISSTYTSSP), 565 to 592 (SAPVAVSSTYTSSPSAPVAISSTYTSSP), 593 to 620 (SVPVAVSSTYTSSPSAPAAISSTYTSSP), 621 to 648 (SAPVAVSSTYTSSPSAPAAISSTYTSSP), 649 to 676 (SVPVAVSSTYTSSPSAPAAISSTYTSSP), 677 to 704 (SVPVAVSSTYTSSPSAPAAISSTYTSSP), 705 to 732 (SAPVAVSSTYTSSPSAPAAISSTYTSSP), 733 to 760 (SAPVAVSSTYTSSPSAPAAISSTYTSSP), and 761 to 788 (SAPVAVSSTYTSSPSALVVLSSTSTSSP). 2 disordered regions span residues 961-984 (SLQSQLSSSTKNPYDTANKNTETS) and 1067-1165 (ETIP…SYSR). 2 stretches are compositionally biased toward polar residues: residues 970–984 (TKNPYDTANKNTETS) and 1071–1123 (ASKS…TNTK). Residues 1136–1165 (TMGENGEETGLTTTKTQYKSSSETSGSYSR) are compositionally biased toward low complexity. N-linked (GlcNAc...) asparagine glycans are attached at residues asparagine 1252, asparagine 1293, asparagine 1342, and asparagine 1400. The helical transmembrane segment at 1486–1506 (IIIFLIVLTIGVLLWLFVAFF) threads the bilayer. The Cytoplasmic portion of the chain corresponds to 1507 to 1802 (AFRHRNILLK…KQQNHQTTKI (296 aa)). The tract at residues 1534-1559 (ESTELSRSSSGNQVYNEKPPESENES) is disordered.

It belongs to the HKR1/MSB2 family. In terms of processing, could be O-glycosylated in the serine/threonine-rich domain.

It localises to the cell membrane. Functionally, plasma membrane signaling mucin that promotes activation of the MAPK for the filamentous growth pathway. May regulate beta-glucan synthesis. Overexpression provides resistance to HM-1 killer toxin. The sequence is that of Signaling mucin HKR1 (HKR1) from Saccharomyces cerevisiae (strain ATCC 204508 / S288c) (Baker's yeast).